Reading from the N-terminus, the 291-residue chain is Methionine aminopeptidase (291 aa).

Histidine 118 serves as a coordination point for substrate. Residues aspartate 135, aspartate 146, and histidine 209 each coordinate a divalent metal cation. Substrate is bound at residue histidine 216. Positions 241 and 273 each coordinate a divalent metal cation.

Belongs to the peptidase M24A family. Methionine aminopeptidase type 1 subfamily. Monomer. Requires Co(2+) as cofactor. Zn(2+) serves as cofactor. Mn(2+) is required as a cofactor. It depends on Fe(2+) as a cofactor.

It catalyses the reaction Release of N-terminal amino acids, preferentially methionine, from peptides and arylamides.. In terms of biological role, removes the N-terminal methionine from nascent proteins. The N-terminal methionine is often cleaved when the second residue in the primary sequence is small and uncharged (Met-Ala-, Cys, Gly, Pro, Ser, Thr, or Val). Requires deformylation of the N(alpha)-formylated initiator methionine before it can be hydrolyzed. This is Methionine aminopeptidase from Chlamydia muridarum (strain MoPn / Nigg).